A 361-amino-acid polypeptide reads, in one-letter code: Probable mannitol dehydrogenase (361 aa).

Residues Cys51, His73, Cys104, Cys107, Cys110, Cys118, and Cys167 each coordinate Zn(2+).

Belongs to the zinc-containing alcohol dehydrogenase family. Zn(2+) is required as a cofactor.

The catalysed reaction is D-mannitol + NAD(+) = D-mannose + NADH + H(+). Oxidizes mannitol to mannose. Provides the initial step by which translocated mannitol is committed to central metabolism and, by regulating mannitol pool size, is important in regulating salt tolerance at the cellular level. The polypeptide is Probable mannitol dehydrogenase (ELI3) (Mesembryanthemum crystallinum (Common ice plant)).